We begin with the raw amino-acid sequence, 256 residues long: Leucyl/phenylalanyl-tRNA--protein transferase (256 aa).

Belongs to the L/F-transferase family.

The protein resides in the cytoplasm. It catalyses the reaction N-terminal L-lysyl-[protein] + L-leucyl-tRNA(Leu) = N-terminal L-leucyl-L-lysyl-[protein] + tRNA(Leu) + H(+). The enzyme catalyses N-terminal L-arginyl-[protein] + L-leucyl-tRNA(Leu) = N-terminal L-leucyl-L-arginyl-[protein] + tRNA(Leu) + H(+). It carries out the reaction L-phenylalanyl-tRNA(Phe) + an N-terminal L-alpha-aminoacyl-[protein] = an N-terminal L-phenylalanyl-L-alpha-aminoacyl-[protein] + tRNA(Phe). Its function is as follows. Functions in the N-end rule pathway of protein degradation where it conjugates Leu, Phe and, less efficiently, Met from aminoacyl-tRNAs to the N-termini of proteins containing an N-terminal arginine or lysine. This is Leucyl/phenylalanyl-tRNA--protein transferase from Hydrogenovibrio crunogenus (strain DSM 25203 / XCL-2) (Thiomicrospira crunogena).